The following is a 95-amino-acid chain: Co-chaperonin GroES (95 aa).

It belongs to the GroES chaperonin family. In terms of assembly, heptamer of 7 subunits arranged in a ring. Interacts with the chaperonin GroEL.

Its subcellular location is the cytoplasm. Functionally, together with the chaperonin GroEL, plays an essential role in assisting protein folding. The GroEL-GroES system forms a nano-cage that allows encapsulation of the non-native substrate proteins and provides a physical environment optimized to promote and accelerate protein folding. GroES binds to the apical surface of the GroEL ring, thereby capping the opening of the GroEL channel. The polypeptide is Co-chaperonin GroES (Clostridium acetobutylicum (strain ATCC 824 / DSM 792 / JCM 1419 / IAM 19013 / LMG 5710 / NBRC 13948 / NRRL B-527 / VKM B-1787 / 2291 / W)).